Reading from the N-terminus, the 142-residue chain is MTTVVAQGTFDLLHPGHLHYLREAAGMGDQLHVILARRENVTHKDPPILPNEQRREMVAALDPVDEAIVGHDDDIFIPVERIDPDLLVLGYDQHHDRGDIADALAERGIDCVVRRASEYEPGYEGAVLSTGRIVERILETRD.

Residues 9–10 (TF), 14–17 (HPGH), D92, and Y119 contribute to the ATP site.

The protein belongs to the archaeal FAD synthase family. In terms of assembly, homodimer. Requires a divalent metal cation as cofactor.

It catalyses the reaction FMN + ATP + H(+) = FAD + diphosphate. The protein operates within cofactor biosynthesis; FAD biosynthesis; FAD from FMN: step 1/1. In terms of biological role, catalyzes the transfer of the AMP portion of ATP to flavin mononucleotide (FMN) to produce flavin adenine dinucleotide (FAD) coenzyme. This is FAD synthase from Halorhabdus utahensis (strain DSM 12940 / JCM 11049 / AX-2).